Reading from the N-terminus, the 73-residue chain is Protein kish (73 aa).

The signal sequence occupies residues 1–21; sequence MTAIFNFESLLFVILLTICTC. Residues 22-52 are Lumenal-facing; sequence TYLHRQFPALLEKRKEGVTMVFWKCARIGER. The chain crosses the membrane as a helical span at residues 53–73; the sequence is ASPYISLFCVFMALRFIFGSS.

Belongs to the KISH family.

The protein localises to the golgi apparatus membrane. It is found in the endoplasmic reticulum membrane. Involved in the early part of the secretory pathway. In Schizosaccharomyces pombe (strain 972 / ATCC 24843) (Fission yeast), this protein is Protein kish (ksh1).